We begin with the raw amino-acid sequence, 239 residues long: Uridylate kinase (239 aa).

13 to 16 (KLSG) is an ATP binding site. Glycine 55 is a UMP binding site. ATP is bound by residues glycine 56 and arginine 60. UMP-binding positions include aspartate 75 and 136–143 (TGNPFFTT). 4 residues coordinate ATP: threonine 163, asparagine 164, tyrosine 169, and aspartate 172.

This sequence belongs to the UMP kinase family. Homohexamer.

It is found in the cytoplasm. The enzyme catalyses UMP + ATP = UDP + ADP. The protein operates within pyrimidine metabolism; CTP biosynthesis via de novo pathway; UDP from UMP (UMPK route): step 1/1. With respect to regulation, inhibited by UTP. Functionally, catalyzes the reversible phosphorylation of UMP to UDP. This Neisseria gonorrhoeae (strain ATCC 700825 / FA 1090) protein is Uridylate kinase.